The following is a 1925-amino-acid chain: Cilia- and flagella-associated protein 65 (1925 aa).

Residues 188-208 (FFTVIPQPIFLSPGITLTLPI) form a helical membrane-spanning segment. The region spanning 877–986 (QLKLDTHKSL…THYMLRLVGV (110 aa)) is the MSP domain. A coiled-coil region spans residues 1525 to 1550 (SQQLMRQYHKELQEWKDEKVRQEVEF). Disordered regions lie at residues 1645–1667 (KRKA…WGPV) and 1736–1823 (SSWE…PESQ). Composition is skewed to basic and acidic residues over residues 1649–1661 (PREE…EKSP) and 1739–1762 (EDGK…KKEE). The segment covering 1763–1804 (GEEEKGEEEEEELEEEEEEEEETEEEELGKEEIEEKEEERDE) has biased composition (acidic residues).

The protein belongs to the CFAP65 family. As to quaternary structure, interacts with CFAP47.

It localises to the cell projection. Its subcellular location is the cilium. It is found in the flagellum membrane. The protein localises to the cytoplasmic vesicle. The protein resides in the secretory vesicle. It localises to the acrosome membrane. Its subcellular location is the cytoplasm. Plays a role in flagellar formation and sperm motility. This is Cilia- and flagella-associated protein 65 from Homo sapiens (Human).